We begin with the raw amino-acid sequence, 230 residues long: Vacuole-localized protein 4 (230 aa).

The N-terminal stretch at 1 to 19 (MRVSSAIFTIASGIAAVSA) is a signal peptide.

Its subcellular location is the vacuole. Vacuolar protein required for aerial conidiation and conidial maturation. Also involved in blastospore production and cell cycle. Plays a vital role in the secretion of Pr1 proteases for cuticular penetration and hence contributes significantly to host infection and virulence. The polypeptide is Vacuole-localized protein 4 (Beauveria bassiana (strain ARSEF 2860) (White muscardine disease fungus)).